Reading from the N-terminus, the 252-residue chain is 3-dehydroquinate dehydratase (252 aa).

Residues Ser-21, 46–48, and Arg-82 contribute to the 3-dehydroquinate site; that span reads EWR. The active-site Proton donor/acceptor is His-143. The active-site Schiff-base intermediate with substrate is the Lys-170. 3-dehydroquinate is bound by residues Arg-213, Ser-232, and Gln-236.

This sequence belongs to the type-I 3-dehydroquinase family. As to quaternary structure, homodimer.

The catalysed reaction is 3-dehydroquinate = 3-dehydroshikimate + H2O. Its pathway is metabolic intermediate biosynthesis; chorismate biosynthesis; chorismate from D-erythrose 4-phosphate and phosphoenolpyruvate: step 3/7. Functionally, involved in the third step of the chorismate pathway, which leads to the biosynthesis of aromatic amino acids. Catalyzes the cis-dehydration of 3-dehydroquinate (DHQ) and introduces the first double bond of the aromatic ring to yield 3-dehydroshikimate. The polypeptide is 3-dehydroquinate dehydratase (Escherichia coli O139:H28 (strain E24377A / ETEC)).